The primary structure comprises 557 residues: Formate--tetrahydrofolate ligase 2 (557 aa).

ATP is bound at residue 66–73 (TPAGEGKT).

This sequence belongs to the formate--tetrahydrofolate ligase family.

The enzyme catalyses (6S)-5,6,7,8-tetrahydrofolate + formate + ATP = (6R)-10-formyltetrahydrofolate + ADP + phosphate. The protein operates within one-carbon metabolism; tetrahydrofolate interconversion. The sequence is that of Formate--tetrahydrofolate ligase 2 from Streptococcus pyogenes serotype M28 (strain MGAS6180).